Here is a 441-residue protein sequence, read N- to C-terminus: MCVCQTMEVGQYGKNASRAGDRGVLLEPFIHQVGGHSSMMRYDDHTVCKPLISREQRFYESLPPEMKEFTPEYKGVVSVCFEGDSDGYINLVAYPYVESETVEQDDTTEREQPRRKHSRRSLHRSGSGSDHKEEKASLSLETSESSQEAKSPKVELHSHSEVPFQMLDGNSGLSSEKISHNPWSLRCHKQQLSRMRSESKDRKLYKFLLLENVVHHFKYPCVLDLKMGTRQHGDDASAEKAARQMRKCEQSTSATLGVRVCGMQVYQLDTGHYLCRNKYYGRGLSIEGFRNALYQYLHNGLDLRRDLFEPILSKLRGLKAVLERQASYRFYSSSLLVIYDGKECRAESCLDRRSEMRLKHLDMVLPEVASSCGPSTSPSNTSPEAGPSSQPKVDVRMIDFAHSTFKGFRDDPTVHDGPDRGYVFGLENLISIMEQMRDENQ.

Positions 100-175 (ETVEQDDTTE…MLDGNSGLSS (76 aa)) are disordered. Over residues 113–123 (PRRKHSRRSLH) the composition is skewed to basic residues. Residues 137 to 149 (SLSLETSESSQEA) are compositionally biased toward low complexity. Basic and acidic residues predominate over residues 150–160 (KSPKVELHSHS). Ser151 is modified (phosphoserine). 220–228 (PCVLDLKMG) is a binding site for substrate. A disordered region spans residues 370–392 (SSCGPSTSPSNTSPEAGPSSQPK). Residues 372–391 (CGPSTSPSNTSPEAGPSSQP) are compositionally biased toward polar residues.

Belongs to the inositol phosphokinase (IPK) family.

It localises to the cytoplasm. Its subcellular location is the nucleus. The catalysed reaction is 1D-myo-inositol hexakisphosphate + ATP = 5-diphospho-1D-myo-inositol 1,2,3,4,6-pentakisphosphate + ADP. It carries out the reaction 1-diphospho-1D-myo-inositol 2,3,4,5,6-pentakisphosphate + ATP + H(+) = 1,5-bis(diphospho)-1D-myo-inositol 2,3,4,6-tetrakisphosphate + ADP. Its function is as follows. Converts inositol hexakisphosphate (InsP6) to diphosphoinositol pentakisphosphate (InsP7/PP-InsP5). Converts 1,3,4,5,6-pentakisphosphate (InsP5) to PP-InsP4. This chain is Inositol hexakisphosphate kinase 1 (IP6K1), found in Homo sapiens (Human).